Reading from the N-terminus, the 366-residue chain is Neutral protease 2 homolog BDBG_02110 (366 aa).

Residues 1–19 (MQLSSVLLTAAGLLAPVYS) form the signal peptide. The propeptide occupies 23-184 (ISIGRRSEGL…RAKIHDHLAQ (162 aa)). Asparagine 123 and asparagine 192 each carry an N-linked (GlcNAc...) asparagine glycan. A disulfide bridge links cysteine 272 with cysteine 290. Residue histidine 314 coordinates Zn(2+). Glutamate 315 is a catalytic residue. Residue histidine 318 coordinates Zn(2+).

Belongs to the peptidase M35 family. Zn(2+) serves as cofactor.

The protein localises to the secreted. It carries out the reaction Preferential cleavage of bonds with hydrophobic residues in P1'. Also 3-Asn-|-Gln-4 and 8-Gly-|-Ser-9 bonds in insulin B chain.. Secreted metalloproteinase that allows assimilation of proteinaceous substrates. Shows high activities on basic nuclear substrates such as histone and protamine. The polypeptide is Neutral protease 2 homolog BDBG_02110 (Blastomyces gilchristii (strain SLH14081) (Blastomyces dermatitidis)).